Consider the following 235-residue polypeptide: Probable queuosine precursor transporter (235 aa).

The next 6 helical transmembrane spans lie at 17–37, 56–76, 87–107, 127–147, 155–175, and 201–221; these read IIWLSFFHIFIIAASNYFVQI, FHSTWGTLTFPFIFLATDLTV, IIFVVMFPALIVSYVISVLFS, IAIASFAAYVVGQLLDVIVFN, WWVAPTSSMTFGSMADTFVFF, and FKLFIGIILFVPAYGVVLNVI.

The protein belongs to the vitamin uptake transporter (VUT/ECF) (TC 2.A.88) family. Q precursor transporter subfamily.

Its subcellular location is the cell inner membrane. Its function is as follows. Involved in the import of queuosine (Q) precursors, required for Q precursor salvage. The sequence is that of Probable queuosine precursor transporter from Haemophilus influenzae (strain ATCC 51907 / DSM 11121 / KW20 / Rd).